Reading from the N-terminus, the 141-residue chain is MAKKIVAVIKLALQAGKANPAPPVGPALGQHGVNIMAFCKEYNAKTQDKAGFVIPVEISVFEDRSFTFITKTPPASVLITKAAGIEKGSGDSAKGQVGTINRAQLEEIAKTKLPDLNCSNIESAMRVIEGTARNMGVSVKD.

The protein belongs to the universal ribosomal protein uL11 family. As to quaternary structure, part of the ribosomal stalk of the 50S ribosomal subunit. Interacts with L10 and the large rRNA to form the base of the stalk. L10 forms an elongated spine to which L12 dimers bind in a sequential fashion forming a multimeric L10(L12)X complex. Post-translationally, one or more lysine residues are methylated.

Functionally, forms part of the ribosomal stalk which helps the ribosome interact with GTP-bound translation factors. The polypeptide is Large ribosomal subunit protein uL11 (Prochlorococcus marinus (strain MIT 9211)).